A 244-amino-acid polypeptide reads, in one-letter code: Tabinhibitin 8 (244 aa).

The signal sequence occupies residues 1 to 23 (MTSILVSRFKISALTLQYATSDS). In terms of domain architecture, SCP spans 67 to 194 (YTGGGIIVLR…KTPLFFSSNC (128 aa)). Positions 143–145 (RGD) match the Cell attachment site motif.

The protein belongs to the CRISP family. Expressed in salivary glands.

The protein resides in the secreted. Functionally, inhibits platelet aggregation induced by all agonists tested (ADP, arachidonic acid, the thromboxane A2 analog U46619, thrombin, and snake venom snaclecs (TMVA that activates platelet through GPIB, and stejnulxin that specifically acts through GPVI (GP6))). May act by competing with fibrinogen for binding to glycoprotein IIb/IIIa (ITGA2B/ITGB3). This Tabanus yao (Horsefly) protein is Tabinhibitin 8.